The primary structure comprises 356 residues: GDSL esterase/lipase At2g36325 (356 aa).

The signal sequence occupies residues 1–26 (MNITKLTPWFLFSCLILLSDYIKVNS). An N-linked (GlcNAc...) asparagine glycan is attached at Asn25. The active-site Nucleophile is Ser54. N-linked (GlcNAc...) asparagine glycans are attached at residues Asn165, Asn185, and Asn240. Residues Asp334 and His337 contribute to the active site.

It belongs to the 'GDSL' lipolytic enzyme family.

The protein localises to the secreted. This chain is GDSL esterase/lipase At2g36325, found in Arabidopsis thaliana (Mouse-ear cress).